We begin with the raw amino-acid sequence, 308 residues long: Cyclopropane mycolic acid synthase 2 (308 aa).

S-adenosyl-L-methionine contacts are provided by residues 44–45 (YS), 79–87 (LLDIGCGWG), 105–110 (TLSANQ), and 137–138 (WE). Cys290 is a catalytic residue.

It belongs to the CFA/CMAS family. As to quaternary structure, homodimer.

It is found in the cytoplasm. The catalysed reaction is a 1-acyl-2-(9Z)-enoyl-sn-glycero-3-phospholipid + S-adenosyl-L-methionine = a 1-acyl-2-(9-cyclopronane)-acyl-sn-glycero-3-phospholipid + S-adenosyl-L-homocysteine + H(+). The protein operates within lipid metabolism; mycolic acid biosynthesis. Functionally, catalyzes the formation of trans cyclopropanated ketomycolate or methoxymycolate through the conversion of a double bond to a cyclopropane ring at the proximal position of an oxygenated mycolic acid via the transfer of a methylene group from S-adenosyl-L-methionine. In the absence of MmaA2, CmaA2 has a non-specific cis-cyclopropanating activity and is able to catalyze the conversion of a double bond to a cis cyclopropane ring at the distal position of an alpha mycolic acid. Cyclopropanated mycolic acids are key factors participating in cell envelope permeability, host immunomodulation and persistence. This Mycobacterium leprae (strain TN) protein is Cyclopropane mycolic acid synthase 2 (cmaA2).